A 251-amino-acid polypeptide reads, in one-letter code: NADPH-dependent oxidoreductase (251 aa).

Belongs to the flavin oxidoreductase frp family. The cofactor is FMN.

Functionally, reduces FMN, organic nitro compounds and disulfide DTNB. Involved in maintenance of the cellular redox state and the disulfide stress response. The chain is NADPH-dependent oxidoreductase (nfrA) from Staphylococcus aureus (strain bovine RF122 / ET3-1).